The chain runs to 1105 residues: DNA polymerase delta catalytic subunit (1105 aa).

Positions 1–46 (MSSGGRGGKRRGAPPPGPSGAAAKRAHPGGTPQPPPPAATAAAPVA) are disordered. C1015, C1018, C1030, and C1033 together coordinate Zn(2+). The segment at 1015–1033 (CLGCKAVISGSNQTLCFHC) adopts a CysA-type zinc-finger fold. [4Fe-4S] cluster is bound by residues C1062, C1065, C1075, and C1080. Residues 1062-1080 (CQECQGSLHQDVLCTSRDC) carry the CysB motif motif.

It belongs to the DNA polymerase type-B family. In terms of assembly, heterodimer with subunits of 125 kDa and 50 kDa. The 125 kDa subunit contains the polymerase active site and most likely the active site for the 3'-5' exonuclease activity. [4Fe-4S] cluster serves as cofactor.

It is found in the nucleus. It carries out the reaction DNA(n) + a 2'-deoxyribonucleoside 5'-triphosphate = DNA(n+1) + diphosphate. In terms of biological role, this polymerase possesses two enzymatic activities: DNA synthesis (polymerase) and an exonucleolytic activity that degrades single-stranded DNA in the 3'- to 5'-direction. This chain is DNA polymerase delta catalytic subunit (POLD1), found in Oryza sativa subsp. japonica (Rice).